A 510-amino-acid chain; its full sequence is Internal alternative NAD(P)H-ubiquinone oxidoreductase A1, mitochondrial (510 aa).

Residues 1 to 48 (MLWIKNLARISQTTSSSVGNVFRNPESYTLSSRFCTALQKQQVTDTVQ) constitute a mitochondrion transit peptide. 75-105 (RVLVLGSGWAGCRVLKGIDTSIYDVVCVSPR) provides a ligand contact to FAD. 242–278 (LHCVVVGGGPTGVEFSGELSDFIMKDVRQRYSHVKDD) serves as a coordination point for NAD(+). The short motif at 501–510 (FVFGRDISRI) is the Microbody targeting signal element.

Belongs to the NADH dehydrogenase family. It depends on FAD as a cofactor. Expressed in seedlings, cotyledons, young leaves, stems and flowers and, to a lower extent, in roots and buds.

The protein resides in the mitochondrion inner membrane. The protein localises to the peroxisome. It carries out the reaction a quinone + NADH + H(+) = a quinol + NAD(+). The enzyme catalyses a ubiquinone + NADH + H(+) = a ubiquinol + NAD(+). Functionally, alternative NADH-ubiquinone oxidoreductase which catalyzes the oxidation of mitochondrial NADH does not translocate protons across the inner mitochondrial membrane. In Arabidopsis thaliana (Mouse-ear cress), this protein is Internal alternative NAD(P)H-ubiquinone oxidoreductase A1, mitochondrial (NDA1).